We begin with the raw amino-acid sequence, 75 residues long: Penaeidin-3l (75 aa).

An N-terminal signal peptide occupies residues 1–19; it reads MRLVVCLVFLASFALVCQG. Residue glutamine 20 is modified to Pyrrolidone carboxylic acid. 3 cysteine pairs are disulfide-bonded: cysteine 44–cysteine 59, cysteine 48–cysteine 66, and cysteine 60–cysteine 67. The residue at position 74 (serine 74) is a Serine amide.

This sequence belongs to the penaeidin family.

The protein resides in the cytoplasmic granule. Functionally, antibacterial and antifungal activity. Presents chitin-binding activity. In Penaeus setiferus (Atlantic white shrimp), this protein is Penaeidin-3l.